The primary structure comprises 711 residues: MLDGPLFSEGPDSPRELQDEESGSCLWVQKSKLLVIEVKTISCHYSRRAPSRQPMDFQASHWARGFQNRTCGPRPGSPQPPPRRPWASRVLQEATNWRAGPLAEVRAREQEKRKAASQEREAKETERKRRKAGGARRSPPGRPRPEPRNAPRVAQLAGLPAPLRPERLAPVGRAPRPSAQPQSDPGSAWAGPWGGRRPGPPSYEAHLLLRGSAGTAPRRRWDRPPPYVAPPSYEGPHRTLGTKRGPGNSQVPTSSAPAATPARTDGGRTKKRLDPRIYRDVLGAWGLRQGQGLLGGSPGCGAARARPEPGKGVVEKSLGLAAADLNSGSDSHPQAKATGSAGTEIAPAGSATAAPCAPHPAPRSRHHLKGSREGKEGEQIWFPKCWIPSPKKQPPRHSQTLPRPWAPGGTGWRESLGLGEGAGPETLEGWKATRRAHTLPRSSQGLSRGEGVFVIDATCVVIRSQYVPTPRTQQVQLLPSGVTRVVGDSPSQSKPGKEEGEGATVFPSPCQKRLSSSRLLHQPGGGRGGEAEGGRPGDSTLEERTFRILGLPAPEVNLRDAPTQPGSPEHQALGPAASGAQGRAEGSEVAVVQRRAGRGWARTPGPYAGALREAVSRIRRHTAPDSDTDEAEELSVHSGSSDGSDTEAPGASWRNERTLPEVGNSSPEEDGKTAELSDSVGEILDVISQTEEVLFGVRDIRGTQQGNRKRQ.

4 disordered regions span residues 1–22, 49–273, 324–446, and 479–677; these read MLDG…DEES, APSR…KKRL, DLNS…SQGL, and PSGV…AELS. Positions 75–84 are enriched in pro residues; that stretch reads PGSPQPPPRR. A coiled-coil region spans residues 102 to 134; it reads LAEVRAREQEKRKAASQEREAKETERKRRKAGG. A compositionally biased stretch (basic and acidic residues) spans 105 to 127; it reads VRAREQEKRKAASQEREAKETER. Residues 113–131 are nuclear localization; that stretch reads RKAASQEREAKETERKRRK. Positions 150–161 are enriched in low complexity; sequence APRVAQLAGLPA. An interaction with MAGI2 region spans residues 186-236; the sequence is GSAWAGPWGGRRPGPPSYEAHLLLRGSAGTAPRRRWDRPPPYVAPPSYEGP. Composition is skewed to low complexity over residues 252–262 and 346–356; these read PTSSAPAATPA and APAGSATAAPC. The interaction with ACTN1 stretch occupies residues 341 to 436; it reads AGTEIAPAGS…LEGWKATRRA (96 aa). At Ser389 the chain carries Phosphoserine. The segment at 408-709 is interaction with CD2AP and NPHS1; that stretch reads GGTGWRESLG…IRGTQQGNRK (302 aa). Basic and acidic residues predominate over residues 529–546; sequence GEAEGGRPGDSTLEERTF.

As to quaternary structure, forms a ternary complex with MAGI2 and SH3KBP1; recruits DDN to the cytoplasm. Interacts with MAGI1. Interacts with ACTN1 and may interact with WWC1. Interacts with the podocyte slit diaphragm proteins CD2AP, NPHS1 and NPHS2; the interaction with CD2AP and NPHS1 is direct. As to expression, specifically expressed in brain and kidney. Expressed in kidney glomerular capillary loops (at protein level).

The protein localises to the cell projection. It is found in the dendritic spine membrane. The protein resides in the cytoplasm. Its subcellular location is the endoplasmic reticulum membrane. It localises to the perikaryon. The protein localises to the nucleus. Its function is as follows. Promotes apoptosis of kidney glomerular podocytes. Podocytes are highly specialized cells essential to the ultrafiltration of blood, resulting in the extraction of urine and the retention of protein. This Homo sapiens (Human) protein is Dendrin (DDN).